The following is a 209-amino-acid chain: Outer-membrane lipoprotein LolB (209 aa).

The signal sequence occupies residues 1–21 (MNNMKTFKFLTALFATAILTA). The N-palmitoyl cysteine moiety is linked to residue Cys22. Cys22 carries S-diacylglycerol cysteine lipidation.

Belongs to the LolB family. As to quaternary structure, monomer.

The protein resides in the cell outer membrane. Its function is as follows. Plays a critical role in the incorporation of lipoproteins in the outer membrane after they are released by the LolA protein. This Haemophilus influenzae (strain 86-028NP) protein is Outer-membrane lipoprotein LolB.